A 271-amino-acid polypeptide reads, in one-letter code: MATTQQSGFAPAASPLASTIVQTPDDAIVAGFTSIPSQGDNMPAYHARPKQSDGPLPVVIVVQEIFGVHEHIRDICRRLALEGYLAIAPELYFREGDPNDFADIPTLLSGLVAKVPDSQVLADLDHVASWASRNGGDVHRLMITGFCWGGRITWLYAAHNPQLKAAVAWYGKLTGDKSLNSPKQPVDIATDLNAPILGLYGGQDNSIPQESVETMRQALRAANAKAEIIVYPDAGHAFNADYRPSYHAASAEDGWQRMLEWFKQYGGKKSL.

Catalysis depends on residues Cys-147, Asp-204, and His-236.

Belongs to the dienelactone hydrolase family.

The enzyme catalyses 2-(5-oxo-2,5-dihydrofuran-2-ylidene)acetate + H2O = 4-oxohex-2-enedioate + H(+). The polypeptide is Putative carboxymethylenebutenolidase (ysgA) (Escherichia coli (strain K12)).